A 253-amino-acid polypeptide reads, in one-letter code: Sulfate transporter CysZ (253 aa).

The next 4 membrane-spanning stretches (helical) occupy residues 31–51 (FVILPLLVNILLMGGAFWWLF), 75–95 (LLWPLAVISVLLVFGYFFSTI), 151–171 (IVLLILYFIPGIGQTVAPVLW), and 222–242 (IPLLNLFIMPVAVCGATAMWV).

The protein belongs to the CysZ family.

Its subcellular location is the cell inner membrane. High affinity, high specificity proton-dependent sulfate transporter, which mediates sulfate uptake. Provides the sulfur source for the cysteine synthesis pathway. This is Sulfate transporter CysZ from Escherichia coli O127:H6 (strain E2348/69 / EPEC).